The following is a 487-amino-acid chain: ESCRT-I complex subunit vps23 (487 aa).

The 60-residue stretch at 428–487 (SERELKYYELKRKDEKLDEGIRALNQALHHESIMPASWLKGIKLLARQQFLIRDEMLQYS) folds into the SB domain.

In terms of assembly, component of the ESCRT-I complex (endosomal sorting complex required for transport I).

It localises to the cytoplasm. It is found in the endosome. The protein resides in the late endosome membrane. Component of the ESCRT-I complex, a regulator of vesicular trafficking process. Binds to ubiquitinated cargo proteins and is required for the sorting of endocytic ubiquitinated cargos into multivesicular bodies (MVBs). Mediates the association to the ESCRT-0 complex. In Schizosaccharomyces pombe (strain 972 / ATCC 24843) (Fission yeast), this protein is ESCRT-I complex subunit vps23 (sst6).